The following is a 477-amino-acid chain: MSWEVVIGLETHVQLNTRSKIFSGSSTAFGAEPNTQANVVDVALPGVLPVLNKEAVQCAIRFGLAVNAEIAPRSVFARKNYFYPDLPKGYQISQYELPVVGKGALTIQVGDTEKTIRITRAHLEEDAGKSMHGASPGQSGIDLNRAGTPLLEIVTEPDMRSAAEAVAYARKLHELVQWINICDGNMQEGSFRCDVNVSVRRKGQEKLGTRREIKNLNSFRFMQQAIEFETRWQIETLEDGGKIEQATVLFNPDTGETRAMRTKEEANDYRYFPDPDLLPLAISTEDIDAVRVTLPELPSAMKARFERDYGLSAYDASALTASRSVADYFTATLAEFGGEAKLVANWVMGGISAKLNEEGREITDAPVSPVLLAGLLKRIADNTISSKIAKDVFEAMWAGEGDADAIIERKGLKQVTDSGAIEAIVDEVLAANAAMVEEFRAGKEKAFNALVGQTMKASKGKANPAQVNEILKRKLAG.

The protein belongs to the GatB/GatE family. GatB subfamily. As to quaternary structure, heterotrimer of A, B and C subunits.

The catalysed reaction is L-glutamyl-tRNA(Gln) + L-glutamine + ATP + H2O = L-glutaminyl-tRNA(Gln) + L-glutamate + ADP + phosphate + H(+). It catalyses the reaction L-aspartyl-tRNA(Asn) + L-glutamine + ATP + H2O = L-asparaginyl-tRNA(Asn) + L-glutamate + ADP + phosphate + 2 H(+). In terms of biological role, allows the formation of correctly charged Asn-tRNA(Asn) or Gln-tRNA(Gln) through the transamidation of misacylated Asp-tRNA(Asn) or Glu-tRNA(Gln) in organisms which lack either or both of asparaginyl-tRNA or glutaminyl-tRNA synthetases. The reaction takes place in the presence of glutamine and ATP through an activated phospho-Asp-tRNA(Asn) or phospho-Glu-tRNA(Gln). In Methylobacillus flagellatus (strain ATCC 51484 / DSM 6875 / VKM B-1610 / KT), this protein is Aspartyl/glutamyl-tRNA(Asn/Gln) amidotransferase subunit B.